The chain runs to 46 residues: Protein krueppel (46 aa).

C2H2-type zinc fingers lie at residues 1–4, 10–32, and 38–46; these read MRLH, YQCL…LRVH, and YACEICPSR.

This sequence belongs to the krueppel C2H2-type zinc-finger protein family.

The protein resides in the nucleus. Krueppel is a gap class segmentation protein. The sequence is that of Protein krueppel (Kr) from Pholcus phalangioides (Longbodied cellar spider).